A 101-amino-acid chain; its full sequence is NADH-quinone oxidoreductase subunit K (101 aa).

3 helical membrane passes run 4 to 24 (LSHFLVLGGVLFAIAVLGIFL), 30 to 50 (IVLLMAIELMLLAVNMNFIAF), and 61 to 81 (VFVFFILTVAAAESAIGLAIL).

This sequence belongs to the complex I subunit 4L family. As to quaternary structure, NDH-1 is composed of 14 different subunits. Subunits NuoA, H, J, K, L, M, N constitute the membrane sector of the complex.

The protein resides in the cell inner membrane. It catalyses the reaction a quinone + NADH + 5 H(+)(in) = a quinol + NAD(+) + 4 H(+)(out). NDH-1 shuttles electrons from NADH, via FMN and iron-sulfur (Fe-S) centers, to quinones in the respiratory chain. The immediate electron acceptor for the enzyme in this species is believed to be ubiquinone. Couples the redox reaction to proton translocation (for every two electrons transferred, four hydrogen ions are translocated across the cytoplasmic membrane), and thus conserves the redox energy in a proton gradient. The protein is NADH-quinone oxidoreductase subunit K of Thiobacillus denitrificans (strain ATCC 25259 / T1).